The sequence spans 380 residues: DNA primase small subunit PriS (380 aa).

Active-site residues include Asp-103, Asp-105, and Asp-284.

The protein belongs to the eukaryotic-type primase small subunit family. Heterodimer of a small subunit (PriS) and a large subunit (PriL). The cofactor is Mg(2+). It depends on Mn(2+) as a cofactor.

In terms of biological role, catalytic subunit of DNA primase, an RNA polymerase that catalyzes the synthesis of short RNA molecules used as primers for DNA polymerase during DNA replication. The small subunit contains the primase catalytic core and has DNA synthesis activity on its own. Binding to the large subunit stabilizes and modulates the activity, increasing the rate of DNA synthesis while decreasing the length of the DNA fragments, and conferring RNA synthesis capability. The DNA polymerase activity may enable DNA primase to also catalyze primer extension after primer synthesis. May also play a role in DNA repair. The chain is DNA primase small subunit PriS from Methanocorpusculum labreanum (strain ATCC 43576 / DSM 4855 / Z).